We begin with the raw amino-acid sequence, 549 residues long: Glucose-6-phosphate isomerase (549 aa).

The Proton donor role is filled by Glu353. Residues His384 and Lys512 contribute to the active site.

The protein belongs to the GPI family.

Its subcellular location is the cytoplasm. It catalyses the reaction alpha-D-glucose 6-phosphate = beta-D-fructose 6-phosphate. It participates in carbohydrate biosynthesis; gluconeogenesis. It functions in the pathway carbohydrate degradation; glycolysis; D-glyceraldehyde 3-phosphate and glycerone phosphate from D-glucose: step 2/4. Its function is as follows. Catalyzes the reversible isomerization of glucose-6-phosphate to fructose-6-phosphate. The sequence is that of Glucose-6-phosphate isomerase from Solidesulfovibrio magneticus (strain ATCC 700980 / DSM 13731 / RS-1) (Desulfovibrio magneticus).